The following is a 295-amino-acid chain: Probable CBASS effector molecule IK1_05631 (295 aa).

Helical transmembrane passes span 26–46 (IFYAVRISISILIPILSISIY), 56–76 (SNTGVWFSVIGSIWLLIAYQI), 167–187 (ILLFTVSVLYLFLTIAFGFFV), and 190–210 (SMQEYIIKILLPSMSILIYGF).

It is found in the cell membrane. Effector protein of a CBASS antiviral system. CBASS (cyclic oligonucleotide-based antiphage signaling system) provides immunity against bacteriophage. The CD-NTase protein synthesizes cyclic nucleotides in response to infection; these serve as specific second messenger signals. The signals activate a diverse range of effectors, leading to bacterial cell death and thus abortive phage infection. A type I-B CBASS system. In terms of biological role, protects B.subtilis against phage infection. When IK1_05630 and IK1_05631 are introduced in B.subtilis BEST7003 there is 1000-fold protection against phage SBSphiC. Both genes are required for protection. Activation leads to bacterial cell lysis and death, which occurs before the phage has finished its replication cycle, thus protecting non-infected bacteria by aborting the phage infection and preventing its propagation. In Bacillus cereus (strain VD146), this protein is Probable CBASS effector molecule IK1_05631.